Here is a 353-residue protein sequence, read N- to C-terminus: Pleckstrin-2 (353 aa).

Position 1 is an N-acetylmethionine (Met-1). In terms of domain architecture, PH 1 spans Gly-4–His-104. Ser-120 is modified (phosphoserine). Residues Ser-139 to Glu-225 form the DEP domain. Residues Thr-247–Thr-353 enclose the PH 2 domain.

Its subcellular location is the cell projection. It is found in the lamellipodium membrane. The protein localises to the cytoplasm. The protein resides in the cytoskeleton. May help orchestrate cytoskeletal arrangement. Contribute to lamellipodia formation. The protein is Pleckstrin-2 (PLEK2) of Homo sapiens (Human).